The primary structure comprises 118 residues: Large ribosomal subunit protein bL20 (118 aa).

This sequence belongs to the bacterial ribosomal protein bL20 family.

Its function is as follows. Binds directly to 23S ribosomal RNA and is necessary for the in vitro assembly process of the 50S ribosomal subunit. It is not involved in the protein synthesizing functions of that subunit. The sequence is that of Large ribosomal subunit protein bL20 from Clostridioides difficile (strain 630) (Peptoclostridium difficile).